The chain runs to 186 residues: Ribosome-recycling factor (186 aa).

Residues 140-163 (LKKAEKDGDIGQDEGRSLSERVQK) are disordered.

It belongs to the RRF family.

Its subcellular location is the cytoplasm. Responsible for the release of ribosomes from messenger RNA at the termination of protein biosynthesis. May increase the efficiency of translation by recycling ribosomes from one round of translation to another. This Rhizobium rhizogenes (strain K84 / ATCC BAA-868) (Agrobacterium radiobacter) protein is Ribosome-recycling factor.